We begin with the raw amino-acid sequence, 1207 residues long: DNA-directed RNA polymerase, mitochondrial (1207 aa).

The N-terminal 41 residues, 1–41, are a transit peptide targeting the mitochondrion; it reads MSALRWTRSAAGLGRVLRSPGPHRPPSEEGTFGGFCSSRRS. Disordered regions lie at residues 1–48 and 82–103; these read MSAL…SPRE and KKVQVDRPPQGHSSRWAQKLEA. 2 PPR repeats span residues 232–266 and 267–302; these read TLHMYNTVMLGWARKGSFRELVYVFLMLKDAGLSP and DLCSYAAALQCMGRRDQDVRTIQRCLKQMMEEGFQP. The disordered stretch occupies residues 702–724; that stretch reads VPPPRSEAPRPARYQLPPGSTPV. Residues 773–1207 are mediates interaction with TEFM; that stretch reads FRGRTYPCPP…QVIRSTYFFS (435 aa). Active-site residues include aspartate 893, lysine 962, and aspartate 1121.

The protein belongs to the phage and mitochondrial RNA polymerase family. As to quaternary structure, homodimer. Component of the mitochondrial transcription initiation complex, composed at least of TFB2M, TFAM and POLRMT. In this complex TFAM recruits POLRMT to the promoter whereas TFB2M induces structural changes in POLRMT to enable promoter opening and trapping of the DNA non-template strand. Upon metabolic stress, forms a complex composed of FOXO3, SIRT3 and mitochondrial RNA polymerase POLRMT; the complex is recruited to mtDNA in a SIRT3-dependent manner. Also forms a complex composed of FOXO3, SIRT3, TFAM and POLRMT. Interacts with TFB1M and TFB2M, leading to the stimulation of transcription. Interacts with TEFM. Interacts with MTRES1.

It is found in the mitochondrion. The enzyme catalyses RNA(n) + a ribonucleoside 5'-triphosphate = RNA(n+1) + diphosphate. Functionally, DNA-dependent RNA polymerase catalyzes the transcription of mitochondrial DNA into RNA using the four ribonucleoside triphosphates as substrates. Component of the mitochondrial transcription initiation complex, composed at least of TFB2M, TFAM and POLRMT that is required for basal transcription of mitochondrial DNA. In this complex, TFAM recruits POLRMT to a specific promoter whereas TFB2M induces structural changes in POLRMT to enable promoter opening and trapping of the DNA non-template strand. Has DNA primase activity. Catalyzes the synthesis of short RNA primers that are necessary for the initiation of lagging-strand DNA synthesis from the origin of light-strand DNA replication (OriL). In Mus musculus (Mouse), this protein is DNA-directed RNA polymerase, mitochondrial.